Reading from the N-terminus, the 84-residue chain is MRNRNLLKFLPGLLICLIVLTSCVPKQKNMPYALTQRSIPQILPLPSEAKQPKPPKECSPTCSEILQQKLSFMLKLLTNATSQE.

Residues 1 to 22 (MRNRNLLKFLPGLLICLIVLTS) form the signal peptide. Cys-23 carries N-palmitoyl cysteine lipidation. Residue Cys-23 is the site of S-diacylglycerol cysteine attachment.

It is found in the cell membrane. This Escherichia coli (strain K12) protein is Putative lipoprotein RzoQ (rzoQ).